Reading from the N-terminus, the 931-residue chain is Neuropilin-2 (931 aa).

Positions 1 to 20 form a signal peptide, or 22; sequence MDMFPLTWVFLALYFSRHQV. At 21-864 the chain is on the extracellular side; sequence RGQPDPPCGG…EKSWLYTLDP (844 aa). Cystine bridges form between C28/C55, C83/C105, and C149/C175. 2 CUB domains span residues 28–142 and 149–267; these read CGGR…YEIF and CSKN…YYLV. N-linked (GlcNAc...) asparagine glycans are attached at residues N152 and N157. Ca(2+) contacts are provided by E197, D211, and D252. A disulfide bond links C208 and C230. 2 disulfide bridges follow: C277–C427 and C434–C592. F5/8 type C domains lie at 277–427 and 434–592; these read CNVP…LFGC and CSNM…VLGC. A compositionally biased stretch (polar residues) spans 298–310; that stretch reads TYSDGRWTPQQSR. The tract at residues 298–317 is disordered; it reads TYSDGRWTPQQSRLHGDDNG. The segment at 601–622 is disordered; it reads VETLGPTVKSEETTTPYPTEEE. The N-linked (GlcNAc...) asparagine glycan is linked to N629. The MAM domain maps to 642–802; the sequence is SGFNCNFDFL…TDVPLENCME (161 aa). N-linked (GlcNAc...) asparagine glycosylation is present at N839. A helical membrane pass occupies residues 865–889; that stretch reads ILITIIAMSSLGVLLGATCAGLLLY. Over 890-931 the chain is Cytoplasmic; the sequence is CTCSYSGLSSRSCTTLENYNFELYDGLKHKVKMNHQKCCSEA.

The protein belongs to the neuropilin family. Heterodimer with NRP1. Binds PLXNB1. In terms of assembly, (Microbial infection) Interacts with human cytomegalovirus proteins gL, UL128, UL130 and UL131A.

The protein resides in the membrane. It localises to the secreted. Its function is as follows. High affinity receptor for semaphorins 3C, 3F, VEGF-165 and VEGF-145 isoforms of VEGF, and the PLGF-2 isoform of PGF. (Microbial infection) Acts as a receptor for human cytomegalovirus pentamer-dependent entry in epithelial and endothelial cells. This Homo sapiens (Human) protein is Neuropilin-2 (NRP2).